Here is a 565-residue protein sequence, read N- to C-terminus: Protein priB (565 aa).

A DNA-binding region (zn(2)-C6 fungal-type) is located at residues 20 to 50 (CTTCRAAKMKCVGAEDGQRQCQRCKRANVQC). Disordered stretches follow at residues 82–170 (AKSK…SDRA) and 195–224 (NPED…APAG). A compositionally biased stretch (basic and acidic residues) spans 90–111 (DARHSSSYRDSHPSLGEPDDRY). Positions 129–155 (SNLPPLNLPSYPDAASEYTASSTSSRT) are enriched in low complexity. Over residues 203–215 (GPSSVRCSETYSP) the composition is skewed to polar residues.

The protein resides in the nucleus. This is Protein priB (priB) from Lentinula edodes (Shiitake mushroom).